A 583-amino-acid chain; its full sequence is Arginine--tRNA ligase (583 aa).

The 'HIGH' region signature appears at 121–131 (ANPTGPLHLGH).

This sequence belongs to the class-I aminoacyl-tRNA synthetase family. As to quaternary structure, monomer.

It localises to the cytoplasm. It catalyses the reaction tRNA(Arg) + L-arginine + ATP = L-arginyl-tRNA(Arg) + AMP + diphosphate. This chain is Arginine--tRNA ligase (argS), found in Aquifex aeolicus (strain VF5).